We begin with the raw amino-acid sequence, 1431 residues long: Collagen alpha-1(XVII) chain (1431 aa).

The Cytoplasmic portion of the chain corresponds to 1-468 (MDVTKKNKRD…AWCPCGSCCS (468 aa)). Residues 1-569 (MDVTKKNKRD…MTEQENGNLR (569 aa)) form a nonhelical region (NC16) region. Disordered regions lie at residues 25–155 (TRLT…PSTR), 167–188 (KGSR…PIPK), 304–324 (TAYG…TGVS), and 422–449 (SVEN…GGGG). Low complexity predominate over residues 60 to 74 (GSSGYINSSGSIRGN). 3 stretches are compositionally biased toward polar residues: residues 75–96 (ASTS…SPGS), 111–120 (EGSSSGNSSP), and 170–184 (RSAS…SSTL). The segment at 146–231 (RLQSASPSTR…WSSTLPAGSS (86 aa)) is necessary for interaction with DST and for the recruitment of DST to hemidesmosome. The segment covering 430-449 (RGGGSGGGARGGGGSGGGGG) has biased composition (gly residues). Residues 469–489 (WWKWLLGLLLTWLLLLGLLFG) form a helical; Signal-anchor for type II membrane protein membrane-spanning segment. Over 490-1431 (LIALAEEVRK…RRRRSIAIKP (942 aa)) the chain is Extracellular. Residue S547 is modified to Phosphoserine; by CK2. 4 disordered regions span residues 564 to 869 (ENGN…SFIS), 884 to 996 (DLRG…SSSG), 1158 to 1178 (DIIG…PGVS), and 1208 to 1249 (FIIG…SSSV). A triple-helical region region spans residues 570-1417 (GNPGPKGDMG…KGDKGDKGDQ (848 aa)). 3 stretches are compositionally biased toward low complexity: residues 657–673 (PRGL…RGPN), 738–751 (EPGA…AGPD), and 778–799 (PGKP…PGRP). 6 stretches are compositionally biased toward pro residues: residues 823–844 (PGPP…PGPA), 889–911 (LGPP…PRGP), 937–946 (PPGPPGPPGP), 979–989 (PPGPPGPPGPP), 1162–1174 (PPGP…PRGP), and 1212–1221 (PPGPPGPQGP). N-linked (GlcNAc...) asparagine glycosylation is present at N1230. A compositionally biased stretch (polar residues) spans 1232-1249 (SWGSSSSARRGTAYSSSV). Residue N1356 is glycosylated (N-linked (GlcNAc...) asparagine). Residues 1366–1431 (RTHGAIPGPP…RRRRSIAIKP (66 aa)) form a disordered region. Residues 1407 to 1416 (QKGDKGDKGD) are compositionally biased toward basic and acidic residues. A nonhelical region (NC1) region spans residues 1418–1431 (VYTGRRRRSIAIKP). Basic residues predominate over residues 1421-1431 (GRRRRSIAIKP).

In terms of assembly, homotrimers of alpha 1(XVII)chains. Interacts (via cytoplasmic region) with ITGB4 (via cytoplasmic region). Interacts (via cytoplasmic region) with DST (via N-terminus). Interacts (via N-terminus) with PLEC. Interacts (via cytoplasmic region) with DSP. Post-translationally, the intracellular/endo domain is disulfide-linked. In terms of processing, prolines at the third position of the tripeptide repeating unit (G-X-Y) are hydroxylated in some or all of the chains. The ectodomain is shedded from the surface of keratinocytes resulting in a 120-kDa soluble form, also named as 120 kDa linear IgA disease antigen homolog. The shedding is mediated by membrane-bound metalloproteases. This cleavage is inhibited by phosphorylation at Ser-547.

The protein resides in the cell junction. It is found in the hemidesmosome. Its subcellular location is the membrane. It localises to the secreted. The protein localises to the extracellular space. The protein resides in the extracellular matrix. It is found in the basement membrane. Its function is as follows. May play a role in the integrity of hemidesmosome and the attachment of basal keratinocytes to the underlying basement membrane. In terms of biological role, the 120 kDa linear IgA disease antigen homolog is an anchoring filament component involved in dermal-epidermal cohesion. This chain is Collagen alpha-1(XVII) chain (COL17A1), found in Mesocricetus auratus (Golden hamster).